Reading from the N-terminus, the 418-residue chain is Phospho-N-acetylmuramoyl-pentapeptide-transferase (418 aa).

10 helical membrane-spanning segments follow: residues 22–42 (YISF…VLIG), 72–92 (TPTM…LLLA), 95–115 (SNIY…LGLI), 135–155 (IIAQ…SPNI), 208–228 (AATW…VSNG), 244–264 (AIIG…GFAA), 277–297 (LTVF…HNAF), 302–322 (FMGD…AIII), 326–346 (LLLP…MIQV), and 395–415 (KIVV…VVTL).

This sequence belongs to the glycosyltransferase 4 family. MraY subfamily. Requires Mg(2+) as cofactor.

It localises to the cell inner membrane. The enzyme catalyses UDP-N-acetyl-alpha-D-muramoyl-L-alanyl-gamma-D-glutamyl-meso-2,6-diaminopimeloyl-D-alanyl-D-alanine + di-trans,octa-cis-undecaprenyl phosphate = di-trans,octa-cis-undecaprenyl diphospho-N-acetyl-alpha-D-muramoyl-L-alanyl-D-glutamyl-meso-2,6-diaminopimeloyl-D-alanyl-D-alanine + UMP. It functions in the pathway cell wall biogenesis; peptidoglycan biosynthesis. Catalyzes the initial step of the lipid cycle reactions in the biosynthesis of the cell wall peptidoglycan: transfers peptidoglycan precursor phospho-MurNAc-pentapeptide from UDP-MurNAc-pentapeptide onto the lipid carrier undecaprenyl phosphate, yielding undecaprenyl-pyrophosphoryl-MurNAc-pentapeptide, known as lipid I. This chain is Phospho-N-acetylmuramoyl-pentapeptide-transferase, found in Azobacteroides pseudotrichonymphae genomovar. CFP2.